A 281-amino-acid polypeptide reads, in one-letter code: Protein NipSnap homolog 2 (281 aa).

Residues 1–27 (MAARVLLARGGLLRPAAQSAFLPGLRT) constitute a mitochondrion transit peptide.

This sequence belongs to the NipSnap family. In terms of assembly, interacts with CALCOCO2/NDP52, NBR1, SQSTM1/p62, TAX1BP1 and WDFY3/ALFY. Interacts with ATG8 family proteins (MAP1LC3A, MAP1LC3B, MAP1LC3C, GABARAP, GABARAPL1 and GABARAPL2). Interacts with VDAC1.

It is found in the mitochondrion matrix. Its subcellular location is the cytoplasm. Functionally, protein involved in mitophagy by facilitating recruitment of the autophagy machinery required for clearance of damaged mitochondria. Accumulates on the mitochondria surface in response to mitochondrial depolarization and acts as a 'eat me' signal by recruiting proteins involved in selective autophagy, such as autophagy receptors (CALCOCO2/NDP52, NBR1, SQSTM1/p62, TAX1BP1 and WDFY3/ALFY) and ATG8 family proteins (MAP1LC3A, MAP1LC3B, MAP1LC3C, GABARAP, GABARAPL1 and GABARAPL2). May act as a positive regulator of L-type calcium channels. The protein is Protein NipSnap homolog 2 of Mus musculus (Mouse).